Here is a 149-residue protein sequence, read N- to C-terminus: Deoxyuridine 5'-triphosphate nucleotidohydrolase (149 aa).

Residues 66-68 (RSG), N79, 83-85 (TID), and K93 each bind substrate.

This sequence belongs to the dUTPase family. The cofactor is Mg(2+).

It catalyses the reaction dUTP + H2O = dUMP + diphosphate + H(+). It functions in the pathway pyrimidine metabolism; dUMP biosynthesis; dUMP from dCTP (dUTP route): step 2/2. In terms of biological role, this enzyme is involved in nucleotide metabolism: it produces dUMP, the immediate precursor of thymidine nucleotides and it decreases the intracellular concentration of dUTP so that uracil cannot be incorporated into DNA. This is Deoxyuridine 5'-triphosphate nucleotidohydrolase from Corynebacterium glutamicum (strain ATCC 13032 / DSM 20300 / JCM 1318 / BCRC 11384 / CCUG 27702 / LMG 3730 / NBRC 12168 / NCIMB 10025 / NRRL B-2784 / 534).